The following is a 71-amino-acid chain: Large ribosomal subunit protein bL31 (71 aa).

Residues cysteine 16, cysteine 18, cysteine 36, and cysteine 39 each contribute to the Zn(2+) site.

It belongs to the bacterial ribosomal protein bL31 family. Type A subfamily. In terms of assembly, part of the 50S ribosomal subunit. Zn(2+) is required as a cofactor.

Binds the 23S rRNA. This Petrotoga mobilis (strain DSM 10674 / SJ95) protein is Large ribosomal subunit protein bL31.